The following is a 156-amino-acid chain: Arginine repressor (156 aa).

The protein belongs to the ArgR family.

Its subcellular location is the cytoplasm. Its pathway is amino-acid biosynthesis; L-arginine biosynthesis [regulation]. Regulates arginine biosynthesis genes. The sequence is that of Arginine repressor from Tolumonas auensis (strain DSM 9187 / NBRC 110442 / TA 4).